Here is a 78-residue protein sequence, read N- to C-terminus: RNA-binding protein KhpA (78 aa).

In terms of domain architecture, KH spans 29–78 (TIIYELTVAKPDIGKIIGKEGRTIKAIRTLLVSVASRNNVKVSLEIMEDK).

This sequence belongs to the KhpA RNA-binding protein family.

Its subcellular location is the cytoplasm. Functionally, a probable RNA-binding protein. The chain is RNA-binding protein KhpA from Chlamydia caviae (strain ATCC VR-813 / DSM 19441 / 03DC25 / GPIC) (Chlamydophila caviae).